The chain runs to 492 residues: Putative cytochrome P450 136 (492 aa).

Residue Cys439 coordinates heme.

It belongs to the cytochrome P450 family. The cofactor is heme.

The polypeptide is Putative cytochrome P450 136 (cyp136) (Mycobacterium tuberculosis (strain CDC 1551 / Oshkosh)).